The following is an 89-amino-acid chain: Small ribosomal subunit protein uS15 (89 aa).

This sequence belongs to the universal ribosomal protein uS15 family. In terms of assembly, part of the 30S ribosomal subunit. Forms a bridge to the 50S subunit in the 70S ribosome, contacting the 23S rRNA.

Functionally, one of the primary rRNA binding proteins, it binds directly to 16S rRNA where it helps nucleate assembly of the platform of the 30S subunit by binding and bridging several RNA helices of the 16S rRNA. In terms of biological role, forms an intersubunit bridge (bridge B4) with the 23S rRNA of the 50S subunit in the ribosome. This chain is Small ribosomal subunit protein uS15, found in Staphylococcus aureus (strain JH1).